We begin with the raw amino-acid sequence, 370 residues long: Leucine-rich repeat-containing protein 19 (370 aa).

The first 24 residues, 1–24 (MKVTGITILFWPLSMILLSDKIQS), serve as a signal peptide directing secretion. Residues 25-270 (SKREVQCNFT…SEHEPLGKSW (246 aa)) are Extracellular-facing. Asn-32, Asn-37, Asn-62, and Asn-95 each carry an N-linked (GlcNAc...) asparagine glycan. 5 LRR repeats span residues 46–71 (KKDVTILDLSYNQITLNGTDTRVLQT), 72–95 (YFLLTELYLIENKVTILHNNGFGN), 96–119 (LSSLEILNICRNSIYVIQQGAFLG), 120–143 (LNKLKQLYLCQNKIEQLNADVFVP), and 145–168 (RSLKLLNLQGNLISYLDVPPLFHL). Positions 176 to 227 (NLWNCSCSLFNLQNWLNTSNVTLENENITMCSYPNSLQSYNIKTVPHKAECH) constitute an LRRCT domain. N-linked (GlcNAc...) asparagine glycosylation is found at Asn-179, Asn-192, Asn-195, Asn-202, Asn-251, and Asn-256. A helical transmembrane segment spans residues 271–291 (AFLVGVVVTVLTTSLLIFIAI). At 292–370 (KCPIWYNILL…IDIHELCEEN (79 aa)) the chain is on the cytoplasmic side.

Interacts with TRAF2 and TRAF6. Expressed in renal collecting duct epithelial cells.

Its subcellular location is the membrane. Activated by TLR ligands such as LPS, bacterial DNA and peptidoglycan. Functionally, pathogen-recognition receptor which mediates the activation of TRAF2- and TRAF6 NF-kappa-B signaling pathways and induces the expression of pro-inflammatory cytokines. In kidney, prevents infection by uropathogenic bacteria by inducing the production of cytokines, chemokines and antimicrobial substances. In gut, involved in host-microbiota interactions, plays a critical role in promoting the recruitment of immune cells and intestinal inflammation. The protein is Leucine-rich repeat-containing protein 19 of Homo sapiens (Human).